The primary structure comprises 174 residues: Zinc finger AN1 domain-containing stress-associated protein 15 (174 aa).

A disordered region spans residues 1–61; it reads MAQESCDLNK…TPPAAAAAAS (61 aa). Residues 18–41 are compositionally biased toward low complexity; that stretch reads PSSSSSPSPSPTTASPSPPTAQMT. Pro residues predominate over residues 42-54; sequence EPPPPQSTPPTPP. An AN1-type zinc finger spans residues 109-155; sequence VLFVNRCNVCRKRVGLTGFRCRCGELFCPRHRHSETHECSFDYKTAG. Positions 115, 118, 129, 131, 136, 139, 145, and 147 each coordinate Zn(2+).

May be involved in environmental stress response. This Oryza sativa subsp. japonica (Rice) protein is Zinc finger AN1 domain-containing stress-associated protein 15 (SAP15).